The sequence spans 499 residues: Putative alpha-galactosidase 8 (499 aa).

N-linked (GlcNAc...) asparagine glycans are attached at residues Asn154 and Asn191. Asp238 acts as the Nucleophile in catalysis. Asn256 carries an N-linked (GlcNAc...) asparagine glycan. Asp303 serves as the catalytic Proton donor.

Belongs to the glycosyl hydrolase 27 family.

It localises to the secreted. The enzyme catalyses Hydrolysis of terminal, non-reducing alpha-D-galactose residues in alpha-D-galactosides, including galactose oligosaccharides, galactomannans and galactolipids.. In terms of biological role, putative alpha-galactosidase involved in the degradation of simple oligosaccharides like melibiose, raffinose and stachyose, and of polymeric galacto(gluco)mannans. The polypeptide is Putative alpha-galactosidase 8 (agl8) (Emericella nidulans (strain FGSC A4 / ATCC 38163 / CBS 112.46 / NRRL 194 / M139) (Aspergillus nidulans)).